The following is a 677-amino-acid chain: Vertnin (677 aa).

Disordered regions lie at residues 356 to 376 (GSTG…SSPE) and 458 to 490 (HSGS…KLSP). The span at 458 to 472 (HSGSSEEGSDADKSQ) shows a compositional bias: basic and acidic residues.

The protein belongs to the vertnin family.

It is found in the nucleus. In terms of biological role, functions as a transcriptional repressor that modulates bmp2b expression during dorsoventral patterning. The protein is Vertnin (vrtn) of Danio rerio (Zebrafish).